A 311-amino-acid polypeptide reads, in one-letter code: Olfactory receptor 4K1 (311 aa).

At 1-25 the chain is on the extracellular side; it reads MAHTNESMVSEFVLLGLSNSWGLQL. An N-linked (GlcNAc...) asparagine glycan is attached at Asn-5. Residues 26 to 49 traverse the membrane as a helical segment; that stretch reads FFFAIFSIVYVTSVLGNVLIIVII. Residues 50–57 are Cytoplasmic-facing; it reads SFDSHLNS. A helical transmembrane segment spans residues 58-79; sequence PMYFLLSNLSFIDICQSNFATP. Over 80-100 the chain is Extracellular; that stretch reads KMLVDFFIERKTISFEGCMAQ. A disulfide bridge links Cys-97 with Cys-189. Residues 101-120 traverse the membrane as a helical segment; sequence IFVLHSFVGSEMMLLVAMAY. At 121 to 139 the chain is on the cytoplasmic side; the sequence is DRFIAICKPLHYSTIMNRR. The helical transmembrane segment at 140 to 158 threads the bilayer; it reads LCVIFVSISWAVGVLHSVS. Residues 159 to 195 are Extracellular-facing; that stretch reads HLAFTVDLPFCGPNEVDSFFCDLPLVIELACMDTYEM. Residues 196-219 form a helical membrane-spanning segment; it reads EIMTLTNSGLISLSCFLALIISYT. Topologically, residues 220–235 are cytoplasmic; sequence IILIGVRCRSSSGSSK. Residues 236–258 form a helical membrane-spanning segment; it reads ALSTLTAHITVVILFFGPCIYFY. The Extracellular portion of the chain corresponds to 259 to 269; the sequence is IWPFSRLPVDK. A helical transmembrane segment spans residues 270-289; that stretch reads FLSVFYTVCTPLLNPIIYSL. Residues 290–311 lie on the Cytoplasmic side of the membrane; sequence RNEDVKAAMWKLRNRHVNSWKN.

This sequence belongs to the G-protein coupled receptor 1 family.

It is found in the cell membrane. Its function is as follows. Odorant receptor. This chain is Olfactory receptor 4K1 (OR4K1), found in Homo sapiens (Human).